Consider the following 219-residue polypeptide: Alpha N-terminal protein methyltransferase 1 (219 aa).

Residues G64, R69, 111-112, and Q127 contribute to the S-adenosyl-L-methionine site; that span reads LQ.

Belongs to the methyltransferase superfamily. NTM1 family.

The protein resides in the cytoplasm. The enzyme catalyses N-terminal L-alanyl-L-prolyl-L-lysyl-[protein] + 3 S-adenosyl-L-methionine = N-terminal N,N,N-trimethyl-L-alanyl-L-prolyl-L-lysyl-[protein] + 3 S-adenosyl-L-homocysteine + 3 H(+). It carries out the reaction N-terminal L-seryl-L-prolyl-L-lysyl-[protein] + 3 S-adenosyl-L-methionine = N-terminal N,N,N-trimethyl-L-seryl-L-prolyl-L-lysyl-[protein] + 3 S-adenosyl-L-homocysteine + 3 H(+). It catalyses the reaction N-terminal L-prolyl-L-prolyl-L-lysyl-[protein] + 2 S-adenosyl-L-methionine = N-terminal N,N-dimethyl-L-prolyl-L-prolyl-L-lysyl-[protein] + 2 S-adenosyl-L-homocysteine + 2 H(+). Functionally, alpha-N-methyltransferase that methylates the N-terminus of target proteins containing the N-terminal motif [Ala/Pro/Ser]-Pro-Lys when the initiator Met is cleaved. Specifically catalyzes mono-, di- or tri-methylation of exposed alpha-amino group of Ala or Ser residue in the [Ala/Ser]-Pro-Lys motif and mono- or di-methylation of Pro in the Pro-Pro-Lys motif. This chain is Alpha N-terminal protein methyltransferase 1 (tae1), found in Schizosaccharomyces pombe (strain 972 / ATCC 24843) (Fission yeast).